We begin with the raw amino-acid sequence, 329 residues long: Probable cell division protein WhiA (329 aa).

The segment at residues 275–308 (SLEELGALADPPLTKDAVAGRIRRLLAMADKRAQ) is a DNA-binding region (H-T-H motif).

Belongs to the WhiA family.

Involved in cell division and chromosome segregation. This Streptomyces griseus subsp. griseus (strain JCM 4626 / CBS 651.72 / NBRC 13350 / KCC S-0626 / ISP 5235) protein is Probable cell division protein WhiA.